A 446-amino-acid polypeptide reads, in one-letter code: Thymidine phosphorylase (446 aa).

The protein belongs to the thymidine/pyrimidine-nucleoside phosphorylase family. As to quaternary structure, homodimer.

It catalyses the reaction thymidine + phosphate = 2-deoxy-alpha-D-ribose 1-phosphate + thymine. It functions in the pathway pyrimidine metabolism; dTMP biosynthesis via salvage pathway; dTMP from thymine: step 1/2. In terms of biological role, the enzymes which catalyze the reversible phosphorolysis of pyrimidine nucleosides are involved in the degradation of these compounds and in their utilization as carbon and energy sources, or in the rescue of pyrimidine bases for nucleotide synthesis. This chain is Thymidine phosphorylase, found in Psychromonas ingrahamii (strain DSM 17664 / CCUG 51855 / 37).